Reading from the N-terminus, the 372-residue chain is Glutamine synthetase (372 aa).

The 80-residue stretch at V24–G103 folds into the GS beta-grasp domain. The GS catalytic domain occupies H110–Q372.

Belongs to the glutamine synthetase family. In terms of assembly, homooctamer.

It localises to the cytoplasm. The catalysed reaction is L-glutamate + NH4(+) + ATP = L-glutamine + ADP + phosphate + H(+). This chain is Glutamine synthetase (GLN1), found in Candida glabrata (strain ATCC 2001 / BCRC 20586 / JCM 3761 / NBRC 0622 / NRRL Y-65 / CBS 138) (Yeast).